The primary structure comprises 304 residues: Recombination-associated protein RdgC (304 aa).

It belongs to the RdgC family.

The protein localises to the cytoplasm. Its subcellular location is the nucleoid. Functionally, may be involved in recombination. This chain is Recombination-associated protein RdgC, found in Paraburkholderia phymatum (strain DSM 17167 / CIP 108236 / LMG 21445 / STM815) (Burkholderia phymatum).